A 489-amino-acid chain; its full sequence is Adenylosuccinate synthetase 2, chloroplastic (489 aa).

The transit peptide at 1–54 (MPLASLSLDPAPFPLIRPAAGWSGRVLPVPGPAPRLCRPLRAAPVAPATTDEPS) directs the protein to the chloroplast. GTP contacts are provided by residues 76–82 (GDEGKGK) and 104–106 (GHT). Asp-77 acts as the Proton acceptor in catalysis. 2 residues coordinate Mg(2+): Asp-77 and Gly-104. IMP-binding positions include 77 to 80 (DEGK), 102 to 105 (NAGH), Thr-194, Arg-208, Gln-288, Thr-303, and Arg-367. His-105 functions as the Proton donor in the catalytic mechanism. Residue 363–369 (TTTGRPR) coordinates substrate. GTP is bound by residues Arg-369, 395–397 (KLD), and 478–480 (GVG).

Belongs to the adenylosuccinate synthetase family. In terms of assembly, homodimer. Requires Mg(2+) as cofactor.

The protein localises to the plastid. It localises to the chloroplast. It catalyses the reaction IMP + L-aspartate + GTP = N(6)-(1,2-dicarboxyethyl)-AMP + GDP + phosphate + 2 H(+). Its pathway is purine metabolism; AMP biosynthesis via de novo pathway; AMP from IMP: step 1/2. Plays an important role in the de novo pathway and in the salvage pathway of purine nucleotide biosynthesis. Catalyzes the first committed step in the biosynthesis of AMP from IMP. The sequence is that of Adenylosuccinate synthetase 2, chloroplastic from Sorghum bicolor (Sorghum).